The following is a 230-amino-acid chain: uncharacterized protein (230 aa).

Residues 1 to 11 (MPVPSVTVTTD) are compositionally biased toward polar residues. Residues 1 to 88 (MPVPSVTVTT…TLKRPTSNSI (88 aa)) are disordered. Residues 63-73 (DDQHRHSDVHS) show a composition bias toward basic and acidic residues. The segment covering 79 to 88 (TLKRPTSNSI) has biased composition (polar residues). Ser106 carries the phosphoserine modification. Residues 156-179 (LKREDSRVSSTKKEHINDHTDMHS) show a composition bias toward basic and acidic residues. A disordered region spans residues 156 to 203 (LKREDSRVSSTKKEHINDHTDMHSTRSKVTTNSQGSSLEPNKLNMAVE). Positions 182-194 (SKVTTNSQGSSLE) are enriched in polar residues.

This is an uncharacterized protein from Saccharomyces cerevisiae (strain ATCC 204508 / S288c) (Baker's yeast).